We begin with the raw amino-acid sequence, 396 residues long: Aspartate aminotransferase (396 aa).

Residues glycine 34, tryptophan 130, and asparagine 183 each coordinate L-aspartate. Lysine 246 carries the N6-(pyridoxal phosphate)lysine modification. Arginine 374 serves as a coordination point for L-aspartate.

The protein belongs to the class-I pyridoxal-phosphate-dependent aminotransferase family. Homodimer. Pyridoxal 5'-phosphate is required as a cofactor.

The protein localises to the cytoplasm. It carries out the reaction L-aspartate + 2-oxoglutarate = oxaloacetate + L-glutamate. This Haemophilus influenzae (strain ATCC 51907 / DSM 11121 / KW20 / Rd) protein is Aspartate aminotransferase (aspC).